A 307-amino-acid chain; its full sequence is Actin maturation protease (307 aa).

The disordered stretch occupies residues 1–34 (MSLENDAAAPPPPPLPPPPPPQPPSLARSESSKK). Residues 9–24 (APPPPPLPPPPPPQPP) show a composition bias toward pro residues. A peptidase C39-like region spans residues 80-200 (SLIQDGPQCG…WAVASGILLG (121 aa)). The active site involves Cys-88.

This sequence belongs to the ACTMAP family.

The protein resides in the cytoplasm. The enzyme catalyses N-terminal N(alpha)-acetyl-L-methionyl-L-aspartyl-[protein] + H2O = N-terminal L-aspartyl-[protein] + N-acetyl-L-methionine. It catalyses the reaction N-terminal N(alpha)-acetyl-L-methionyl-L-glutamyl-[protein] + H2O = N-terminal L-glutamyl-[protein] + N-acetyl-L-methionine. The catalysed reaction is N-terminal N(alpha)-acetyl-L-cysteinyl-L-aspartyl-[protein] + H2O = N-terminal L-aspartyl-[protein] + N-acetyl-L-cysteine. It carries out the reaction N-terminal N(alpha)-acetyl-L-cysteinyl-L-glutamyl-[protein] + H2O = N-terminal L-glutamyl-[protein] + N-acetyl-L-cysteine. Actin maturation protease that specifically mediates the cleavage of immature acetylated N-terminal actin, thereby contributing to actin maturation. Cleaves N-terminal acetylated methionine of immature cytoplasmic actin after translation. Cleaves N-terminal acetylated cysteine of muscle actin after canonical removal of N-terminal methionine. The chain is Actin maturation protease from Danio rerio (Zebrafish).